The following is a 307-amino-acid chain: D-alanine--D-alanine ligase (307 aa).

In terms of domain architecture, ATP-grasp spans 101–301; that stretch reads KTVMRAAGVS…FGELVRWMVE (201 aa). An ATP-binding site is contributed by 127–182; sequence PLTPPYVVKPIAEGSSMGVIIVRDERSHPPQILASDEWVYGEEVLAETYVAGRELT. Mg(2+) is bound by residues D251, E268, and N270.

Belongs to the D-alanine--D-alanine ligase family. Mg(2+) is required as a cofactor. Requires Mn(2+) as cofactor.

It localises to the cytoplasm. It carries out the reaction 2 D-alanine + ATP = D-alanyl-D-alanine + ADP + phosphate + H(+). The protein operates within cell wall biogenesis; peptidoglycan biosynthesis. Its function is as follows. Cell wall formation. This is D-alanine--D-alanine ligase from Methylorubrum extorquens (strain PA1) (Methylobacterium extorquens).